Consider the following 156-residue polypeptide: Small ribosomal subunit protein eS10 (156 aa).

Positions 91–156 (LKRQTRPEAA…FGRGRQEQEE (66 aa)) are disordered. Residues 95–119 (TRPEAARPRPKEGAPRAQVGEDRAG) show a composition bias toward basic and acidic residues.

The protein belongs to the eukaryotic ribosomal protein eS10 family.

It localises to the cytoplasm. In Lumbricus rubellus (Humus earthworm), this protein is Small ribosomal subunit protein eS10 (RPS10).